We begin with the raw amino-acid sequence, 316 residues long: MKIVKISPRGYCYGVVDAMVIARNAALDTSLPRPIYILGMIVHNKHVTDAFEEDGIITLDGPSRLDILDKIDSGTVIFTAHGVSPEVKQRAKEKGLTTIDATCPDVTKTHDLIEAKKAEGYHVIYIGKKNHPEPEGAVGIAPDIVHLIEKADDLKTLEIPTNKILVTNQTTMSQWDVQHLMEDIQKKFPTAEFHKEICLATQVRQEAVAKQADVADLTIVVGDPKSNNSNRLAQVSQEIAGTKAYRVADVSEIKLEWLQGVENVAVTAGASTPTPITKEVIAFLEQYDPMNPATWERVRKVPLQKILPRVKVKKEQ.

A [4Fe-4S] cluster-binding site is contributed by Cys-12. His-43 and His-81 together coordinate (2E)-4-hydroxy-3-methylbut-2-enyl diphosphate. The dimethylallyl diphosphate site is built by His-43 and His-81. Isopentenyl diphosphate-binding residues include His-43 and His-81. Cys-103 contributes to the [4Fe-4S] cluster binding site. Position 131 (His-131) interacts with (2E)-4-hydroxy-3-methylbut-2-enyl diphosphate. Residue His-131 participates in dimethylallyl diphosphate binding. His-131 serves as a coordination point for isopentenyl diphosphate. The active-site Proton donor is the Glu-133. Thr-170 lines the (2E)-4-hydroxy-3-methylbut-2-enyl diphosphate pocket. Position 198 (Cys-198) interacts with [4Fe-4S] cluster. Residues Ser-226, Asn-228, and Ser-271 each coordinate (2E)-4-hydroxy-3-methylbut-2-enyl diphosphate. Residues Ser-226, Asn-228, and Ser-271 each contribute to the dimethylallyl diphosphate site. Residues Ser-226, Asn-228, and Ser-271 each coordinate isopentenyl diphosphate.

It belongs to the IspH family. [4Fe-4S] cluster serves as cofactor.

It carries out the reaction isopentenyl diphosphate + 2 oxidized [2Fe-2S]-[ferredoxin] + H2O = (2E)-4-hydroxy-3-methylbut-2-enyl diphosphate + 2 reduced [2Fe-2S]-[ferredoxin] + 2 H(+). The enzyme catalyses dimethylallyl diphosphate + 2 oxidized [2Fe-2S]-[ferredoxin] + H2O = (2E)-4-hydroxy-3-methylbut-2-enyl diphosphate + 2 reduced [2Fe-2S]-[ferredoxin] + 2 H(+). The protein operates within isoprenoid biosynthesis; dimethylallyl diphosphate biosynthesis; dimethylallyl diphosphate from (2E)-4-hydroxy-3-methylbutenyl diphosphate: step 1/1. Its pathway is isoprenoid biosynthesis; isopentenyl diphosphate biosynthesis via DXP pathway; isopentenyl diphosphate from 1-deoxy-D-xylulose 5-phosphate: step 6/6. Catalyzes the conversion of 1-hydroxy-2-methyl-2-(E)-butenyl 4-diphosphate (HMBPP) into a mixture of isopentenyl diphosphate (IPP) and dimethylallyl diphosphate (DMAPP). Acts in the terminal step of the DOXP/MEP pathway for isoprenoid precursor biosynthesis. The protein is 4-hydroxy-3-methylbut-2-enyl diphosphate reductase of Bacillus thuringiensis (strain Al Hakam).